We begin with the raw amino-acid sequence, 174 residues long: Anthrone oxygenase CPUR_05435 (174 aa).

4 consecutive transmembrane segments (helical) span residues 13–33 (VALA…AIMI), 56–76 (YGSV…GFAS), 88–108 (CLAA…AMIP), and 140–160 (WVVL…MGFT).

This sequence belongs to the anthrone oxygenase family.

Its subcellular location is the membrane. The catalysed reaction is emodin anthrone + O2 = emodin + H2O + H(+). Its function is as follows. Anthrone oxygenase; part of the ergochrome gene cluster responsible for the typical purple-black color of the ergot sclerotia. The ergochrome gene cluster produces several ergot pigments including the yellow ergochrome secalonic acid and its derivatives, as well as the red anthraquinones endocrocin and clavorubin. The pathway begins with the synthesis of atrochrysone thioester by the polyketide synthase (PKS) CPUR_05437. The atrochrysone carboxyl ACP thioesterase CPUR_05436 then breaks the thioester bond and releases the atrochrysone carboxylic acid from CPUR_05437. The decarboxylase CPUR_05434 then catalyzes the concerted decarboxylation-elimination required to convert atochrysone carboxylic acid into emodin anthrone, which is further oxidized to emodin by the anthrone oxygenase CPUR_05435. Emodin is further modified to yield monodictyphenone via several steps involving CPUR_05427, CPUR_05428, CPUR_05429 and CPUR_05430. The short chain dehydrogenase/reductase CPUR_05418 then catalyzes the C-5 ketoreduction to give the xanthone skeleton of the monomeric units. Ergochromes formation requires further dimerization steps of different xanthone units, probably catalyzed by the cytochrome P450 monooxygenase CPUR_05419. CPUR_05425, CPUR_05426 and CPUR_05431 are unique to Claviceps, thus it is likely that they are involved in further modification of xanthone units or in their dimerization. The yellow ergochromes and the red anthraquinone pigments endocrocin and clavorubin are products from the same PKS derived precursors and the latter are likely shunt products in the pathway of xanthone biosynthesis. It is proposed that atrochrysone carboxylic acid released from the PKS CPUR_05437 can also be converted to endocrocin anthrone which is further oxidized into endocrocin by CPUR_05435. Endocrocin could be then modified to clavorubin, possibly by CPUR_05423 and CPUR_05431. Clavorubin is the principal anthraquinone metabolite produced by the cluster with a much higher yield compared to endocrocin. In Claviceps purpurea (strain 20.1) (Ergot fungus), this protein is Anthrone oxygenase CPUR_05435.